We begin with the raw amino-acid sequence, 800 residues long: MSRRRAHDTEDESFDHRRNKRRRVSENQEIEDRLESLILRVGERSTSSVESNLEGLVSVLEADLGTFRLKILRILSDCAVRMPEKCTVYTTLVGLLNAKNYKFGGEFVDHMVKTFKESLKLCRWDAARYSLRFLADLVNCHVISATSLLQLLDTMIDVSNEDTVPQVRRDWFVFAVLSTLPWVGRDLYEKKESALESLLLRIEVYLNKRSKKHHNALRVWSSDAPHPQEEYLDCLWAQIRKLRQDNWAEKHIPRPYLVFDSILCEALQHNLPQITPPPHHASFEYPMPWVVYRMFDYTDCPDGPNLPGAHSIERFLIEEHLHHIIETHHHERKDCAAQLLNFPFKHKIPLEYCIVEVIFAELFHMPTPRYLDICYGSILIELCKLQPGTLPQVLAQATEILFMRIDSMNTSCFDRFVNWFSYHLSNFKFTWSWDEWDSCLLLDAEHPRPKFIQEVLQKCLRLSYHQRITEMMPTTYAKLIPAPPVPNYKYTNEEAANLPGITVALQLVGAIRQKCTPEEVVNILKEIPNTGYSGEEMSDGSFNALKIDVFVQTLLNLGSKSFSHSFAAISKFHAVFRALAETEEAQICILHNIFELWSSHQQMMVVLIDKLLKLQIVDCSAVATWIFSKEMTGEFTKMYLWEILHLTIKKMNKHVIKLNTELSEAKEKLSKADSSSSDTDEDTPHKRKKPITHADKPSEEVVERMEEKLEAANVNQKRLFLIVFQRFIMILSEHLLRSDTDGRDPDTDWYRWTIGRLQQVFLMHHEQVQKYSSTLETLLFTSDLDSHILEVFQQFVALRA.

Positions 1-25 (MSRRRAHDTEDESFDHRRNKRRRVS) are disordered. Residue Thr9 is modified to Phosphothreonine. Residues 31–243 (EDRLESLILR…CLWAQIRKLR (213 aa)) enclose the MIF4G domain. Positions 668 to 700 (KLSKADSSSSDTDEDTPHKRKKPITHADKPSEE) are disordered.

This sequence belongs to the NCBP1 family. In terms of assembly, component of the nuclear cap-binding complex (CBC), a heterodimer composed of Cbp80 and Cbp20 that interacts with m7GpppG-capped RNA.

Its subcellular location is the nucleus. In terms of biological role, component of the cap-binding complex (CBC), which binds cotranscriptionally to the 5'-cap of pre-mRNAs and is involved in various processes such as pre-mRNA splicing and RNA-mediated gene silencing (RNAi). The CBC complex is involved in miRNA-mediated RNA interference via its interaction with Ars2 and is required for primary microRNAs (miRNAs) processing. Also involved in innate immunity via the short interfering RNAs (siRNAs) processing machinery by restricting the viral RNA production. In the CBC complex, Cbp80 does not bind directly capped RNAs (m7GpppG-capped RNA) but is required to stabilize the movement of the N-terminal loop of Cbp20 and lock the CBC into a high affinity cap-binding state with the cap structure. The chain is Nuclear cap-binding protein subunit 1 (Cbp80) from Drosophila mojavensis (Fruit fly).